The following is a 341-amino-acid chain: Retinol dehydrogenase 10-B (341 aa).

A helical; Signal-anchor membrane pass occupies residues 3 to 23; the sequence is IVLEFFLVTFRVLWAFVLAAA. An NADP(+)-binding site is contributed by 40–64; the sequence is LITGAGSGLGRLFALEFARRRAQLV. Residue Ser197 coordinates substrate. Residue Tyr210 is the Proton acceptor of the active site.

This sequence belongs to the short-chain dehydrogenases/reductases (SDR) family.

It is found in the microsome membrane. The protein localises to the endoplasmic reticulum membrane. It catalyses the reaction all-trans-retinol + NADP(+) = all-trans-retinal + NADPH + H(+). It participates in cofactor metabolism; retinol metabolism. In terms of biological role, retinol dehydrogenase with a clear preference for NADP. Converts all-trans-retinol to all-trans-retinal. Has no detectable activity towards 11-cis-retinol, 9-cis-retinol and 13-cis-retinol. The sequence is that of Retinol dehydrogenase 10-B (rdh10-b) from Xenopus laevis (African clawed frog).